We begin with the raw amino-acid sequence, 763 residues long: Phosphoglycerol transferase I (763 aa).

A run of 4 helical transmembrane segments spans residues 1–21 (MSELLSFALFLASVLIYAWKA), 26–46 (WWFAATLTVLGLFVVLNITLF), 77–97 (ILPGIGIVLGLTAVFGALGWI), and 108–128 (FGYSLLALLLALGSVDASPAF).

This sequence belongs to the OpgB family.

The protein resides in the cell inner membrane. It catalyses the reaction a phosphatidylglycerol + a membrane-derived-oligosaccharide D-glucose = a 1,2-diacyl-sn-glycerol + a membrane-derived-oligosaccharide 6-(glycerophospho)-D-glucose.. It functions in the pathway glycan metabolism; osmoregulated periplasmic glucan (OPG) biosynthesis. Its function is as follows. Transfers a phosphoglycerol residue from phosphatidylglycerol to the membrane-bound nascent glucan backbones. The polypeptide is Phosphoglycerol transferase I (Escherichia coli O17:K52:H18 (strain UMN026 / ExPEC)).